The following is a 302-amino-acid chain: L-aminoadipate-semialdehyde dehydrogenase-phosphopantetheinyl transferase (302 aa).

CoA-binding positions include Arg44, 83 to 88 (RTGKGK), and 105 to 108 (NVSH). The Mg(2+) site is built by Asp126 and Glu178. 178–182 (ESFIK) contributes to the CoA binding site.

Belongs to the P-Pant transferase superfamily. AcpS family. Monomer. Requires Mg(2+) as cofactor.

The protein localises to the cytoplasm. It localises to the cytosol. The catalysed reaction is apo-[ACP] + CoA = holo-[ACP] + adenosine 3',5'-bisphosphate + H(+). The enzyme catalyses apo-[ACP] + acetyl-CoA = acetyl-[ACP] + adenosine 3',5'-bisphosphate + H(+). Functionally, catalyzes the post-translational modification of target proteins by phosphopantetheine. Can transfer the 4'-phosphopantetheine moiety from coenzyme A, regardless of whether the CoA is presented in the free thiol form or as an acetyl thioester, to a serine residue of a broad range of acceptors. This chain is L-aminoadipate-semialdehyde dehydrogenase-phosphopantetheinyl transferase (aasdhppt), found in Xenopus laevis (African clawed frog).